Consider the following 415-residue polypeptide: Gamma-glutamyl phosphate reductase (415 aa).

Belongs to the gamma-glutamyl phosphate reductase family.

The protein localises to the cytoplasm. It catalyses the reaction L-glutamate 5-semialdehyde + phosphate + NADP(+) = L-glutamyl 5-phosphate + NADPH + H(+). It participates in amino-acid biosynthesis; L-proline biosynthesis; L-glutamate 5-semialdehyde from L-glutamate: step 2/2. Functionally, catalyzes the NADPH-dependent reduction of L-glutamate 5-phosphate into L-glutamate 5-semialdehyde and phosphate. The product spontaneously undergoes cyclization to form 1-pyrroline-5-carboxylate. This is Gamma-glutamyl phosphate reductase from Mycobacterium sp. (strain JLS).